The chain runs to 132 residues: MSNKFLGTWKLVSSENFDEYMKALGVGLATRKLGNLAKPRVIISKKGDIITIRTESPFKNTEISFKLGQEFEETTADNRKTKSTVTLARGSLNQVQKWDGNETTIKRKLVDGKMVVECKMKDVVCTRIYEKV.

N-acetylserine is present on Ser-2. (9Z)-octadecenoate is bound at residue Arg-107. Arg-107 provides a ligand contact to hexadecanoate. Cys-118 and Cys-125 form a disulfide bridge. 127–129 (RIY) lines the (9Z)-octadecenoate pocket. 127–129 (RIY) lines the hexadecanoate pocket.

It belongs to the calycin superfamily. Fatty-acid binding protein (FABP) family. Monomer.

It is found in the cytoplasm. In terms of biological role, may play a role in lipid transport protein in Schwann cells. May bind cholesterol. This Bos taurus (Bovine) protein is Myelin P2 protein (PMP2).